Consider the following 114-residue polypeptide: Small ribosomal subunit protein eS25 (114 aa).

The segment at 1–33 (MAPKKDKAPPPSSKPAKSGGKQKKKKWSKGKQK) is disordered. Residues 20–30 (GKQKKKKWSKG) are compositionally biased toward basic residues.

The protein belongs to the eukaryotic ribosomal protein eS25 family.

In Amaranthus cruentus (Purple amaranth), this protein is Small ribosomal subunit protein eS25 (RPS25).